The sequence spans 643 residues: Immediate-early phosphoprotein 57 (643 aa).

Disordered stretches follow at residues 1–180 (MAQK…GGCA) and 194–329 (TGWG…QCPP). The segment covering 24–52 (LDFSESEEEEEEEESSSESESDEDSDMEV) has biased composition (acidic residues). 2 stretches are compositionally biased toward low complexity: residues 57–71 (QEAGPPEQCQQQPQQ) and 83–100 (QQPQQREQGPPQQQQQQR). Residues 103 to 113 (KRGEESGDARP) are compositionally biased toward basic and acidic residues. Residues 162–171 (QQPQSQAAQP) show a composition bias toward low complexity. A compositionally biased stretch (basic and acidic residues) spans 215-241 (RRGDEDRRSGRDRRRREGRERDRESRS). Residues 284 to 297 (AGPSQAQAAQAARA) are compositionally biased toward low complexity. Positions 298 to 307 (PRQEQGERRQ) are enriched in basic and acidic residues. Residues 320 to 329 (QQCPPQQCPP) show a composition bias toward pro residues.

This sequence belongs to the herpesviridae UL69 family.

The polypeptide is Immediate-early phosphoprotein 57 (57) (Equus caballus (Horse)).